The sequence spans 301 residues: Methionyl-tRNA formyltransferase (301 aa).

A (6S)-5,6,7,8-tetrahydrofolate-binding site is contributed by 109–112 (SLLP).

This sequence belongs to the Fmt family.

It catalyses the reaction L-methionyl-tRNA(fMet) + (6R)-10-formyltetrahydrofolate = N-formyl-L-methionyl-tRNA(fMet) + (6S)-5,6,7,8-tetrahydrofolate + H(+). Its function is as follows. Attaches a formyl group to the free amino group of methionyl-tRNA(fMet). The formyl group appears to play a dual role in the initiator identity of N-formylmethionyl-tRNA by promoting its recognition by IF2 and preventing the misappropriation of this tRNA by the elongation apparatus. In Novosphingobium aromaticivorans (strain ATCC 700278 / DSM 12444 / CCUG 56034 / CIP 105152 / NBRC 16084 / F199), this protein is Methionyl-tRNA formyltransferase.